The primary structure comprises 343 residues: MSAFTPASEVLLRHSDDFEQSRILFAGDLQDDLPARLDTAASRAHTQQFHHWQVLSRQMGDNARFSLVATADDVADCDTLIYYWPKNKPEAQFQLMNLLSLLPVGTDIFVVGENRSGVRSAEQMLADYAPLNKVDSARRCGLYFGRLEKQPVFDANKFWGEYSVDGLTVKTLPGVFSRDGLDVGSQLLLSTLTPHTKGKVLDVGCGAGVLSVAFARHSPKIRLTLCDVSAPAVEASRATLAANSVEGEVFASNVFSEVKGRFDMIISNPPFHDGMQTSLDAAQTLIRGAVRHLNSGGELRIVANAFLPYPDVLDETFGFHEVIAQTGRFKVYRAIMTRQAKKG.

It belongs to the methyltransferase superfamily. RsmC family. As to quaternary structure, monomer.

The protein resides in the cytoplasm. It carries out the reaction guanosine(1207) in 16S rRNA + S-adenosyl-L-methionine = N(2)-methylguanosine(1207) in 16S rRNA + S-adenosyl-L-homocysteine + H(+). Specifically methylates the guanine in position 1207 of 16S rRNA in the 30S particle. The polypeptide is Ribosomal RNA small subunit methyltransferase C (Escherichia coli O6:H1 (strain CFT073 / ATCC 700928 / UPEC)).